Here is a 219-residue protein sequence, read N- to C-terminus: Large ribosomal subunit protein uL3 (219 aa).

The tract at residues 133–153 (GRASHGNSRSHNVPGSIGMAQ) is disordered. Glutamine 153 bears the N5-methylglutamine mark.

This sequence belongs to the universal ribosomal protein uL3 family. As to quaternary structure, part of the 50S ribosomal subunit. Forms a cluster with proteins L14 and L19. In terms of processing, methylated by PrmB.

Functionally, one of the primary rRNA binding proteins, it binds directly near the 3'-end of the 23S rRNA, where it nucleates assembly of the 50S subunit. This chain is Large ribosomal subunit protein uL3, found in Burkholderia mallei (strain NCTC 10247).